The sequence spans 426 residues: Inhibin beta A chain (426 aa).

The signal sequence occupies residues 1–20 (MPLLWLRGFLLASCWIIVRS). The propeptide occupies 21 to 310 (SPTPGSEGHS…EDHPHRRRRR (290 aa)). N165 is a glycosylation site (N-linked (GlcNAc...) asparagine). Residues 259–288 (KKKKKEEEGEGKKKGGGEGGAGADEEKEQS) form a disordered region. Positions 263 to 274 (KEEEGEGKKKGG) are enriched in basic and acidic residues. 4 disulfide bridges follow: C314/C322, C321/C391, C350/C423, and C354/C425.

It belongs to the TGF-beta family. Dimeric, linked by one or more disulfide bonds. Inhibin A is a dimer of alpha/INHA and beta-A/INHBA. Activin A is a homodimer of beta-A/INHBA. Activin AB is a dimer of beta-A/INHBA and beta-B/INHBB. Interacts with FST and FSTL3; these interactions prevent activin A interaction to its type II receptor. Activin A interacts with ACVR2A. Activin A interacts with BMPR2. Inhibin A interacts with ACVR1; this interaction creates a non-signaling complex (NSC) that inhibits ACVR1-mediated BMP signaling. Inhibin A interacts with ACVR2A.

Its subcellular location is the secreted. In terms of biological role, inhibins/activins are involved in regulating a number of diverse functions such as hypothalamic and pituitary hormone secretion, gonadal hormone secretion, germ cell development and maturation, erythroid differentiation, insulin secretion, nerve cell survival, embryonic axial development or bone growth, depending on their subunit composition. Functionally, activin A is a homodimer of INHBA that plays a role in several essential biological processes including embryonic development, stem cell maintenance and differentiation, haematopoiesis, cell proliferation and tissue fibrosis. Signals through type I (such as ACVR1B or ACVR1C) and type II receptors (such as ACVR2A, ACVR2B or BMPR2) which, upon ligand binding, phosphorylate SMAD2 and SMAD3 intracellular signaling mediators that form a complex with SMAD4, translocate to the nucleus and modulate gene expression. Can also activate alternative non-canonical intracellular signaling pathways including the p38 MAPK, extracellular signal-regulated kinases 1/2 (ERK1/2) and c-Jun N-terminal kinases (JNKs) to modulate cell migration and differentiation. Alternatively, promotes osteoblastic differentiation via ACVRL1-SMAD1/5/9 pathway. In addition, can engage the type I receptor ACVR1 to form an ACVR1-activin A-type II receptor non-signaling complex (NSC) that renders receptors unavailable for engagement with BMPs, hence resulting in an apparent inhibition of ACVR1-mediated BMP signaling. Its function is as follows. Inhibin A is a dimer of alpha/INHA and beta-A/INHBA that functions as a feedback regulator in the hypothalamic-pituitary-gonadal (HPG) axis. Inhibits the secretion of FSH from the anterior pituitary gland by acting on pituitary gonadotrope cells. Antagonizes activin A by binding to the proteoglycan, betaglycan, and forming a stable complex with and, thereby, sequestering type II activin receptors while excluding type I receptor. In Homo sapiens (Human), this protein is Inhibin beta A chain (INHBA).